We begin with the raw amino-acid sequence, 115 residues long: UPF0102 protein Kole_1919 (115 aa).

Belongs to the UPF0102 family.

This chain is UPF0102 protein Kole_1919, found in Kosmotoga olearia (strain ATCC BAA-1733 / DSM 21960 / TBF 19.5.1).